A 287-amino-acid chain; its full sequence is Ribosomal RNA small subunit methyltransferase I (287 aa).

It belongs to the methyltransferase superfamily. RsmI family.

Its subcellular location is the cytoplasm. The enzyme catalyses cytidine(1402) in 16S rRNA + S-adenosyl-L-methionine = 2'-O-methylcytidine(1402) in 16S rRNA + S-adenosyl-L-homocysteine + H(+). Its function is as follows. Catalyzes the 2'-O-methylation of the ribose of cytidine 1402 (C1402) in 16S rRNA. This is Ribosomal RNA small subunit methyltransferase I from Streptococcus pyogenes serotype M1.